Consider the following 352-residue polypeptide: Photosystem II protein D1 (352 aa).

Threonine 2 carries the post-translational modification N-acetylthreonine. Position 2 is a phosphothreonine (threonine 2). Helical transmembrane passes span 29–46, 118–133, and 142–156; these read YIGW…TATS, HFFL…EWEL, and WIAV…AATA. Histidine 118 contacts chlorophyll a. Residue tyrosine 126 coordinates pheophytin a. Aspartate 170 and glutamate 189 together coordinate [CaMn4O5] cluster. Residues 197–218 form a helical membrane-spanning segment; sequence FHMLGVAGVFGGSLFSAMHGSL. Histidine 198 lines the chlorophyll a pocket. Residues histidine 215 and 264–265 contribute to the a quinone site; that span reads SF. A Fe cation-binding site is contributed by histidine 215. Histidine 272 contributes to the Fe cation binding site. A helical transmembrane segment spans residues 274 to 288; sequence FLAAWPVVGIWFTAL. The [CaMn4O5] cluster site is built by histidine 332, glutamate 333, aspartate 342, and alanine 344. Residues 345–352 constitute a propeptide that is removed on maturation; it reads SVEAPSIA.

Belongs to the reaction center PufL/M/PsbA/D family. As to quaternary structure, PSII is composed of 1 copy each of membrane proteins PsbA, PsbB, PsbC, PsbD, PsbE, PsbF, PsbH, PsbI, PsbJ, PsbK, PsbL, PsbM, PsbT, PsbX, PsbY, PsbZ, Psb30/Ycf12, at least 3 peripheral proteins of the oxygen-evolving complex and a large number of cofactors. It forms dimeric complexes. It depends on The D1/D2 heterodimer binds P680, chlorophylls that are the primary electron donor of PSII, and subsequent electron acceptors. It shares a non-heme iron and each subunit binds pheophytin, quinone, additional chlorophylls, carotenoids and lipids. D1 provides most of the ligands for the Mn4-Ca-O5 cluster of the oxygen-evolving complex (OEC). There is also a Cl(-1) ion associated with D1 and D2, which is required for oxygen evolution. The PSII complex binds additional chlorophylls, carotenoids and specific lipids. as a cofactor. Tyr-161 forms a radical intermediate that is referred to as redox-active TyrZ, YZ or Y-Z. In terms of processing, C-terminally processed by CTPA; processing is essential to allow assembly of the oxygen-evolving complex and thus photosynthetic growth.

The protein resides in the plastid. It localises to the chloroplast thylakoid membrane. The catalysed reaction is 2 a plastoquinone + 4 hnu + 2 H2O = 2 a plastoquinol + O2. Photosystem II (PSII) is a light-driven water:plastoquinone oxidoreductase that uses light energy to abstract electrons from H(2)O, generating O(2) and a proton gradient subsequently used for ATP formation. It consists of a core antenna complex that captures photons, and an electron transfer chain that converts photonic excitation into a charge separation. The D1/D2 (PsbA/PsbD) reaction center heterodimer binds P680, the primary electron donor of PSII as well as several subsequent electron acceptors. The chain is Photosystem II protein D1 from Chlorella ellipsoidea.